Here is a 288-residue protein sequence, read N- to C-terminus: Serpentine receptor class gamma-1 (288 aa).

A run of 7 helical transmembrane segments spans residues 25–45, 59–79, 118–138, 148–168, 197–217, 238–258, and 268–288; these read LFLQLCYLTPSALFLSRVIYI, FYTIFLADCVTGFILVNFSIF, FQILVQILFVANRASCVLWPL, LKSILTTMAISPCLWIWTIAI, FSILRLTSVITIVVATTTMLI, VYLSVCYLLPAIAEFEYFLVL, and ILHGLVVICWDIQNICSTYVM.

It belongs to the nematode receptor-like protein srg family.

The protein resides in the membrane. The protein is Serpentine receptor class gamma-1 (srg-1) of Caenorhabditis elegans.